Here is a 279-residue protein sequence, read N- to C-terminus: Movement protein (279 aa).

Residues 246-279 form a disordered region; that stretch reads SESEELNVESPPAAIGSSSASRSEAFRPQVVNGL. Positions 254 to 268 are enriched in low complexity; sequence ESPPAAIGSSSASRS.

It belongs to the cucumovirus movement protein family.

It is found in the host cell junction. It localises to the host plasmodesma. Its function is as follows. Transports viral genome to neighboring plant cells directly through plasmosdesmata, without any budding. The movement protein allows efficient cell to cell propagation, by bypassing the host cell wall barrier. Acts by forming a tubular structure at the host plasmodesmata, enlarging it enough to allow free passage of virion capsids. The polypeptide is Movement protein (Cucumber mosaic virus (strain O) (CMV)).